Consider the following 194-residue polypeptide: uncharacterized protein (194 aa).

CBS domains are found at residues Met-13–Val-72 and Met-78–Ile-133. The region spanning Tyr-159–Lys-192 is the ACP-type MB domain. 4 residues coordinate Fe cation: Cys-164, Cys-167, Cys-182, and Cys-185. The Zn(2+) site is built by Cys-164, Cys-167, Cys-182, and Cys-185.

This is an uncharacterized protein from Methanocaldococcus jannaschii (strain ATCC 43067 / DSM 2661 / JAL-1 / JCM 10045 / NBRC 100440) (Methanococcus jannaschii).